Reading from the N-terminus, the 391-residue chain is ATP phosphoribosyltransferase regulatory subunit (391 aa).

The protein belongs to the class-II aminoacyl-tRNA synthetase family. HisZ subfamily. As to quaternary structure, heteromultimer composed of HisG and HisZ subunits.

The protein localises to the cytoplasm. It participates in amino-acid biosynthesis; L-histidine biosynthesis; L-histidine from 5-phospho-alpha-D-ribose 1-diphosphate: step 1/9. Its function is as follows. Required for the first step of histidine biosynthesis. May allow the feedback regulation of ATP phosphoribosyltransferase activity by histidine. The sequence is that of ATP phosphoribosyltransferase regulatory subunit from Prochlorococcus marinus (strain NATL1A).